The primary structure comprises 1018 residues: Cell wall protein 1 (1018 aa).

A signal peptide spans 1–17; it reads MLPSIVISIVLASFVSA. The CFEM 1 domain maps to 32–143; sequence NPYTIYPSVA…SSLSAAATAV (112 aa). Intrachain disulfides connect Cys-60-Cys-100, Cys-64-Cys-95, Cys-74-Cys-81, and Cys-83-Cys-116. Residue Asp-78 participates in heme binding. Residues 147-227 are disordered; that stretch reads SEQPVETSSE…STPEDNPYTI (81 aa). Over residues 148–164 the composition is skewed to polar residues; the sequence is EQPVETSSEPAGSSQSV. Positions 165 to 221 are enriched in low complexity; it reads ESSQPAETSSSEPAETSSSEPAETSSETSSEQPASSEPAETSSEESSTITSAPSTPE. CFEM domains lie at 223–334 and 393–504; these read NPYT…ATAV and SSSS…ATAV. Cystine bridges form between Cys-251/Cys-291, Cys-255/Cys-286, Cys-265/Cys-272, and Cys-274/Cys-307. Asp-269 lines the heme pocket. Residues 338–396 form a disordered region; it reads SEQSVETSSESAESSQSVESSQPAETSSEQPSETSSETSSQQLSSITSAPDSSATSSSS. 4 disulfide bridges follow: Cys-421-Cys-461, Cys-425-Cys-456, Cys-435-Cys-442, and Cys-444-Cys-477. A heme-binding site is contributed by Asp-439. The segment at 507 to 557 is disordered; sequence SDSASETASQEPSETSSEQPSETASQQPAETSSEESSTITSAPSTPEDNPY. The segment covering 509 to 553 has biased composition (low complexity); that stretch reads SASETASQEPSETSSEQPSETASQQPAETSSEESSTITSAPSTPE. The 112-residue stretch at 555–666 folds into the CFEM 4 domain; the sequence is NPYTIYPSVA…SSLNAAATAV (112 aa). 4 disulfides stabilise this stretch: Cys-583/Cys-623, Cys-587/Cys-618, Cys-597/Cys-604, and Cys-606/Cys-639. Asp-601 provides a ligand contact to heme. The tract at residues 677–785 is disordered; it reads SASESASQVP…STSTKSDAAS (109 aa). A compositionally biased stretch (low complexity) spans 690-766; it reads SAASSQSANN…AISESVAPSS (77 aa). Asn-698, Asn-708, Asn-718, Asn-729, Asn-743, Asn-753, Asn-769, Asn-798, and Asn-965 each carry an N-linked (GlcNAc...) asparagine glycan. A compositionally biased stretch (polar residues) spans 767–785; sequence YGNSTIAQPSTSTKSDAAS. The GPI-anchor amidated serine moiety is linked to residue Ser-989. A propeptide spans 990–1018 (removed in mature form); the sequence is VAIANMANTKFASTMSLLVASFVFVGLFI.

This sequence belongs to the RBT5 family. In terms of processing, the GPI-anchor is attached to the protein in the endoplasmic reticulum and serves to target the protein to the cell surface. There, the glucosamine-inositol phospholipid moiety is cleaved off and the GPI-modified mannoprotein is covalently attached via its lipidless GPI glycan remnant to the 1,6-beta-glucan of the outer cell wall layer.

The protein localises to the secreted. It is found in the cell wall. It localises to the membrane. Functionally, heme-binding protein involved in heme-iron utilization. The ability to acquire iron from host tissues is a major virulence factor of pathogenic microorganisms. Required for biofilm formation. In Candida albicans (strain SC5314 / ATCC MYA-2876) (Yeast), this protein is Cell wall protein 1 (CSA1).